We begin with the raw amino-acid sequence, 284 residues long: Undecaprenyl-diphosphatase (284 aa).

A run of 8 helical transmembrane segments spans residues 7 to 27 (IILG…TGHL), 44 to 64 (EMFD…LYFH), 90 to 110 (LWLK…PLND), 116 to 136 (FYHF…FIVI), 167 to 187 (VLSL…ALLV), 197 to 217 (FTFF…ILHF), 229 to 249 (FGVL…AIKF), and 259 to 279 (FTFF…YAMF).

It belongs to the UppP family.

It is found in the cell membrane. The enzyme catalyses di-trans,octa-cis-undecaprenyl diphosphate + H2O = di-trans,octa-cis-undecaprenyl phosphate + phosphate + H(+). Functionally, catalyzes the dephosphorylation of undecaprenyl diphosphate (UPP). Confers resistance to bacitracin. This chain is Undecaprenyl-diphosphatase, found in Lactococcus lactis subsp. lactis (strain IL1403) (Streptococcus lactis).